Consider the following 254-residue polypeptide: Leucyl/phenylalanyl-tRNA--protein transferase (254 aa).

It belongs to the L/F-transferase family.

The protein resides in the cytoplasm. It carries out the reaction N-terminal L-lysyl-[protein] + L-leucyl-tRNA(Leu) = N-terminal L-leucyl-L-lysyl-[protein] + tRNA(Leu) + H(+). The catalysed reaction is N-terminal L-arginyl-[protein] + L-leucyl-tRNA(Leu) = N-terminal L-leucyl-L-arginyl-[protein] + tRNA(Leu) + H(+). It catalyses the reaction L-phenylalanyl-tRNA(Phe) + an N-terminal L-alpha-aminoacyl-[protein] = an N-terminal L-phenylalanyl-L-alpha-aminoacyl-[protein] + tRNA(Phe). Its function is as follows. Functions in the N-end rule pathway of protein degradation where it conjugates Leu, Phe and, less efficiently, Met from aminoacyl-tRNAs to the N-termini of proteins containing an N-terminal arginine or lysine. This is Leucyl/phenylalanyl-tRNA--protein transferase from Burkholderia cenocepacia (strain HI2424).